The chain runs to 727 residues: Translation initiation factor IF-2, mitochondrial (727 aa).

Residues 1–29 (MNQKLLKLENLLRFHTICRQVHSPSQRRL) constitute a mitochondrion transit peptide. The region spanning 178–346 (PRSPVVTVMG…ATIALAEILE (169 aa)) is the tr-type G domain. The tract at residues 187-194 (GHVDHGKT) is G1. 187–194 (GHVDHGKT) is a GTP binding site. A G2 region spans residues 212–216 (GITQH). GTP is bound by residues 234-237 (DTPG) and 288-291 (NKCD). A G3 region spans residues 234 to 237 (DTPG). The G4 stretch occupies residues 288–291 (NKCD). Positions 324–326 (SAL) are G5. At Thr688 the chain carries Phosphothreonine.

It belongs to the TRAFAC class translation factor GTPase superfamily. Classic translation factor GTPase family. IF-2 subfamily. In terms of assembly, monomer.

The protein resides in the mitochondrion. Functionally, one of the essential components for the initiation of protein synthesis. Protects formylmethionyl-tRNA from spontaneous hydrolysis and promotes its binding to the 30S ribosomal subunits. Also involved in the hydrolysis of GTP during the formation of the 70S ribosomal complex. This chain is Translation initiation factor IF-2, mitochondrial (Mtif2), found in Mus musculus (Mouse).